A 365-amino-acid chain; its full sequence is Peptide chain release factor 2 (365 aa).

Position 251 is an N5-methylglutamine (Q251).

It belongs to the prokaryotic/mitochondrial release factor family. Methylated by PrmC. Methylation increases the termination efficiency of RF2.

The protein resides in the cytoplasm. Its function is as follows. Peptide chain release factor 2 directs the termination of translation in response to the peptide chain termination codons UGA and UAA. This is Peptide chain release factor 2 from Campylobacter jejuni subsp. jejuni serotype O:2 (strain ATCC 700819 / NCTC 11168).